The chain runs to 359 residues: Nicotinate-nucleotide--dimethylbenzimidazole phosphoribosyltransferase (359 aa).

Catalysis depends on glutamate 318, which acts as the Proton acceptor.

Belongs to the CobT family. In terms of assembly, homodimer.

The catalysed reaction is 5,6-dimethylbenzimidazole + nicotinate beta-D-ribonucleotide = alpha-ribazole 5'-phosphate + nicotinate + H(+). The protein operates within nucleoside biosynthesis; alpha-ribazole biosynthesis; alpha-ribazole from 5,6-dimethylbenzimidazole: step 1/2. In terms of biological role, catalyzes the synthesis of alpha-ribazole-5'-phosphate from nicotinate mononucleotide (NAMN) and 5,6-dimethylbenzimidazole (DMB). The sequence is that of Nicotinate-nucleotide--dimethylbenzimidazole phosphoribosyltransferase from Escherichia coli (strain ATCC 8739 / DSM 1576 / NBRC 3972 / NCIMB 8545 / WDCM 00012 / Crooks).